Reading from the N-terminus, the 29-residue chain is Kunitz-type trypsin inhibitor IVTI (29 aa).

Belongs to the protease inhibitor I3 (leguminous Kunitz-type inhibitor) family. In terms of assembly, monomer and dimer.

Inhibits bovine trypsin but not chymotrypsin. Also inhibits trypsin-like enzymes from midgut of several lepidopteran species and inhibits larval development in those species. Has fungicidal activity against yeast C.buinensis. Has a bacteriostatic effect against E.coli. Is not cytotoxic. This Inga vera (River koko) protein is Kunitz-type trypsin inhibitor IVTI.